A 250-amino-acid chain; its full sequence is Small ribosomal subunit protein uS3 (250 aa).

Residues 39–109 (IRNYVQARLK…EVKIDVVEVI (71 aa)) enclose the KH type-2 domain. Basic and acidic residues predominate over residues 225–239 (INERRGDSKSRPRDP). A disordered region spans residues 225–250 (INERRGDSKSRPRDPRNKRRRRTKRS). Residues 240–250 (RNKRRRRTKRS) are compositionally biased toward basic residues.

Belongs to the universal ribosomal protein uS3 family. Part of the 30S ribosomal subunit. Forms a tight complex with proteins S10 and S14.

Its function is as follows. Binds the lower part of the 30S subunit head. Binds mRNA in the 70S ribosome, positioning it for translation. The chain is Small ribosomal subunit protein uS3 from Chlorobium phaeobacteroides (strain DSM 266 / SMG 266 / 2430).